The sequence spans 181 residues: Adenine phosphoribosyltransferase (181 aa).

This sequence belongs to the purine/pyrimidine phosphoribosyltransferase family. In terms of assembly, homodimer.

It is found in the cytoplasm. It carries out the reaction AMP + diphosphate = 5-phospho-alpha-D-ribose 1-diphosphate + adenine. It participates in purine metabolism; AMP biosynthesis via salvage pathway; AMP from adenine: step 1/1. Catalyzes a salvage reaction resulting in the formation of AMP, that is energically less costly than de novo synthesis. The sequence is that of Adenine phosphoribosyltransferase from Aeromonas salmonicida (strain A449).